A 430-amino-acid polypeptide reads, in one-letter code: MFVDQVKISLKAGDGGNGITAYRREKYVPFGGPAGGDGGKGASVVFEVDEGLRTLLDFRYQRHFKASKGENGQSSNMHGKNAEDLVLKVPPGTIIKNVETDEVLADLVEDGQRAVVAKGGRGGRGNSRFATPRNPAPDFSEKGEPGEELDVSLELKLLADVGLVGFPSVGKSTLLSIVSKAKPKIGAYHFTTIKPNLGVVSTPDQRSFVMADLPGLIEGASDGVGLGHQFLRHVERTKVIVHMIDMSGSEGREPIEDYKVINQELAAYEQRLEDRPQIVVANKMDLPESQDNLNLFKEEIGEDVPVIPVSTITRDNIDQLLYAIADKLEEYKDVDFTVEEEESVGINRVLYKHTPSQDKFTISRDDDGAYVVSGNAIERMFKMTDFNSDPAVRRFARQMRSMGIDDALRERGCKNGDIVRILGGEFEFVE.

Residues 1–158 (MFVDQVKISL…LDVSLELKLL (158 aa)) enclose the Obg domain. Positions 118–145 (KGGRGGRGNSRFATPRNPAPDFSEKGEP) are disordered. The OBG-type G domain maps to 159–329 (ADVGLVGFPS…LLYAIADKLE (171 aa)). GTP is bound by residues 165 to 172 (GFPSVGKS), 190 to 194 (FTTIK), 212 to 215 (DLPG), 282 to 285 (NKMD), and 310 to 312 (STI). Residues Ser-172 and Thr-192 each coordinate Mg(2+). The OCT domain occupies 352–430 (KHTPSQDKFT…ILGGEFEFVE (79 aa)).

It belongs to the TRAFAC class OBG-HflX-like GTPase superfamily. OBG GTPase family. In terms of assembly, monomer. The cofactor is Mg(2+).

The protein localises to the cytoplasm. An essential GTPase which binds GTP, GDP and possibly (p)ppGpp with moderate affinity, with high nucleotide exchange rates and a fairly low GTP hydrolysis rate. Plays a role in control of the cell cycle, stress response, ribosome biogenesis and in those bacteria that undergo differentiation, in morphogenesis control. The protein is GTPase Obg of Staphylococcus aureus (strain Mu3 / ATCC 700698).